A 521-amino-acid chain; its full sequence is MALMVLPFIGPLSVLEGLIALTTVCVVYLLLKHFNKEIPGGLRQLPGPTPLPIIGNLLKLGSKPYLSLTEMSKRFGDVFQIQIGMRPVVVLSGNETVRQALIKQGDDFSGRPDLYSFQFINDGKSLAFSTDQAGVWRARRKLAYSALRSFSSLEGSNAEYSCMLEEHICKETEHLVKEIEKVMKTEGKFDPYRYIVVSVANVICGMCFGRRYDHHDQELVGLVNLSEDFVQVTGSGNPADFIPALRYLPSKAMKKFVEINNRFQSFVQKIVNEHSATYDKDNIRDITDSLIDHCEDRKLDENSNIQMSDEKVVGIVNDLFGAGFDTISTALSWAVGYLVAYPDIEKGLFEEIKENIGLNRNPTISDRSNLPLTDAFILEIFRHSSFLPFTIPHCTTRDTSLNGYYIPKDTCVFINQWQINHDPKLWQDPSSFNPDRFLSEDGSEVNRLDGEKVMVFGLGKRRCIGEVIARNEVFLFLAIMIQKLCFEEMPGEPLDMTPEYGLTMKHKRCNVRASLRLKDGC.

Residue F229 coordinates substrate. C463 is a heme binding site.

The protein belongs to the cytochrome P450 family. Requires heme as cofactor.

The protein localises to the endoplasmic reticulum membrane. It localises to the microsome membrane. It catalyses the reaction an organic molecule + reduced [NADPH--hemoprotein reductase] + O2 = an alcohol + oxidized [NADPH--hemoprotein reductase] + H2O + H(+). Its function is as follows. Cytochromes P450 are a group of heme-thiolate monooxygenases. They oxidize a variety of structurally unrelated compounds, including steroids, fatty acids, and xenobiotics. In Oryzias latipes (Japanese rice fish), this protein is Cytochrome P450 1A1 (cyp1a1).